The chain runs to 361 residues: Phospho-N-acetylmuramoyl-pentapeptide-transferase (361 aa).

The next 10 helical transmembrane spans lie at 28–48 (LAII…IKFL), 74–94 (TMGG…LADL), 99–119 (TWIT…DDYA), 133–153 (SKLL…EYLD), 168–188 (LSLD…VGSS), 203–223 (VPIA…GNLI), 236–256 (TGEL…FLWF), 263–283 (VFMG…ISVI), 288–308 (IVLA…ILQV), and 338–358 (KVVI…LSSL).

It belongs to the glycosyltransferase 4 family. MraY subfamily. Mg(2+) is required as a cofactor.

The protein localises to the cell inner membrane. The enzyme catalyses UDP-N-acetyl-alpha-D-muramoyl-L-alanyl-gamma-D-glutamyl-meso-2,6-diaminopimeloyl-D-alanyl-D-alanine + di-trans,octa-cis-undecaprenyl phosphate = di-trans,octa-cis-undecaprenyl diphospho-N-acetyl-alpha-D-muramoyl-L-alanyl-D-glutamyl-meso-2,6-diaminopimeloyl-D-alanyl-D-alanine + UMP. Its pathway is cell wall biogenesis; peptidoglycan biosynthesis. Its function is as follows. Catalyzes the initial step of the lipid cycle reactions in the biosynthesis of the cell wall peptidoglycan: transfers peptidoglycan precursor phospho-MurNAc-pentapeptide from UDP-MurNAc-pentapeptide onto the lipid carrier undecaprenyl phosphate, yielding undecaprenyl-pyrophosphoryl-MurNAc-pentapeptide, known as lipid I. This is Phospho-N-acetylmuramoyl-pentapeptide-transferase from Rickettsia massiliae (strain Mtu5).